We begin with the raw amino-acid sequence, 113 residues long: MTKINENVAIQFVKGENEKDQPEIRLFRNLDGKKGKAVYKFYKPKTITLTNYKSVQRMFLIDSEGVLSTKKIDLSISEDHVKEVKSTYNWNSEEEFERFMRFASRYANSLSQN.

It belongs to the Psb28 family. In terms of assembly, part of the photosystem II complex.

The protein resides in the cellular thylakoid membrane. The sequence is that of Photosystem II reaction center Psb28 protein from Prochlorococcus marinus (strain NATL2A).